We begin with the raw amino-acid sequence, 250 residues long: Probable replication-associated protein repA2 (250 aa).

It belongs to the IncFII RepA family.

In terms of biological role, this protein is essential for plasmid replication; it is involved in copy control functions. The polypeptide is Probable replication-associated protein repA2 (repA2) (Buchnera aphidicola subsp. Schizaphis graminum (strain Sg)).